Reading from the N-terminus, the 1381-residue chain is DNA-directed RNA polymerase subunit beta (1381 aa).

It belongs to the RNA polymerase beta chain family. As to quaternary structure, the RNAP catalytic core consists of 2 alpha, 1 beta, 1 beta' and 1 omega subunit. When a sigma factor is associated with the core the holoenzyme is formed, which can initiate transcription.

It carries out the reaction RNA(n) + a ribonucleoside 5'-triphosphate = RNA(n+1) + diphosphate. DNA-dependent RNA polymerase catalyzes the transcription of DNA into RNA using the four ribonucleoside triphosphates as substrates. This Sulfurimonas denitrificans (strain ATCC 33889 / DSM 1251) (Thiomicrospira denitrificans (strain ATCC 33889 / DSM 1251)) protein is DNA-directed RNA polymerase subunit beta.